Reading from the N-terminus, the 235-residue chain is Phosphoribosylaminoimidazole-succinocarboxamide synthase (235 aa).

Belongs to the SAICAR synthetase family.

It carries out the reaction 5-amino-1-(5-phospho-D-ribosyl)imidazole-4-carboxylate + L-aspartate + ATP = (2S)-2-[5-amino-1-(5-phospho-beta-D-ribosyl)imidazole-4-carboxamido]succinate + ADP + phosphate + 2 H(+). It functions in the pathway purine metabolism; IMP biosynthesis via de novo pathway; 5-amino-1-(5-phospho-D-ribosyl)imidazole-4-carboxamide from 5-amino-1-(5-phospho-D-ribosyl)imidazole-4-carboxylate: step 1/2. The sequence is that of Phosphoribosylaminoimidazole-succinocarboxamide synthase from Streptococcus mutans serotype c (strain ATCC 700610 / UA159).